The primary structure comprises 162 residues: Protein NrdI (162 aa).

The protein belongs to the NrdI family.

Functionally, probably involved in ribonucleotide reductase function. The sequence is that of Protein NrdI from Streptococcus pyogenes serotype M2 (strain MGAS10270).